Reading from the N-terminus, the 697-residue chain is Polyribonucleotide nucleotidyltransferase (697 aa).

Positions 486 and 492 each coordinate Mg(2+). One can recognise a KH domain in the interval 553–612 (PRIHTIKIHPDKIKDVIGKCGSVIRALTEETKTIIDIEDDGTVTVAATDSIKAQQAICRI). Residues 622 to 690 (GSIYHGKVTR…RQGRIRLSMK (69 aa)) form the S1 motif domain.

It belongs to the polyribonucleotide nucleotidyltransferase family. Component of the RNA degradosome, which is a multiprotein complex involved in RNA processing and mRNA degradation. Mg(2+) serves as cofactor.

Its subcellular location is the cytoplasm. The enzyme catalyses RNA(n+1) + phosphate = RNA(n) + a ribonucleoside 5'-diphosphate. Functionally, involved in mRNA degradation. Catalyzes the phosphorolysis of single-stranded polyribonucleotides processively in the 3'- to 5'-direction. The chain is Polyribonucleotide nucleotidyltransferase from Baumannia cicadellinicola subsp. Homalodisca coagulata.